A 588-amino-acid polypeptide reads, in one-letter code: Disabled homolog 1 (588 aa).

Positions 1–26 (MSTETELQVAVKTSAKKDSRKKGQDR) are disordered. Over residues 15-26 (AKKDSRKKGQDR) the composition is skewed to basic and acidic residues. Positions 36–189 (KGEGVRYKAK…CEQAVYQTIL (154 aa)) constitute a PID domain. A phosphotyrosine mark is found at Tyr198, Tyr220, and Tyr232. Disordered regions lie at residues 224–243 (TSQKKEGVYDVPKSQPNSQP), 420–444 (LATVPGTNDSARSSPQSDKPRQKMG), 451–470 (FQMVQPPPVPSRKPDQPSLT), and 502–588 (LTPV…QDGS). Residues 424–436 (PGTNDSARSSPQS) are compositionally biased toward polar residues. Low complexity-rich tracts occupy residues 503-512 (TPVTSTTPST) and 523-534 (SSPSKSSASHVS). Ser524 carries the post-translational modification Phosphoserine; by CDK5. Acidic residues predominate over residues 537-546 (TADDIFEEGF).

Associates with the SH2 domains of SRC, FYN and ABL. Interacts (phosphorylated on tyrosine residues) with CRK and CRKL (via respective SH2 domain). Interacts with SIAH1, LRP8 and VLDLR. Interacts with LRP1. Interacts with APLP1 (via NPXY motif). Interacts with DAB2IP. Interacts with ZSWIM8. Post-translationally, phosphorylated by FYN on Tyr-198 and Tyr-220 upon reelin induction in embryonic neurons. Also found phosphorylated on Tyr-232 upon reelin induction. Also phosphorylated on Ser-524 independently of reelin signaling. Ubiquitinated by various cullin-5-RING E3 ubiquitin-protein ligase complexes (ECS complexes) following ligand-binding and phosphorylation, leading to its degradation. Ubiquitinated by the ECS(SOCS7) complex in the cortical plate of the developing cerebral cortex following ligand-binding and phosphorylation by FYN, leading to its degradation by the proteasome. Recognized by ZSWIM8 through a disorder targets misorder mechanism that eliminates misfolded DAB1 via ubiquitination and proteasomal degradation. Expressed mainly in brain. Specifically expressin in cortical neurons.

The protein localises to the cytoplasm. In terms of biological role, signaling adapter of the reelin-mediated signaling pathway, which regulates the migration and differentiation of postmitotic neurons during brain development. Mediates intracellular transduction of Reelin signaling following reelin (RELN)-binding to its receptor: acts by docking proteins through its phosphotyrosine residues and PID domain. This is Disabled homolog 1 from Mus musculus (Mouse).